A 514-amino-acid polypeptide reads, in one-letter code: Lysine--tRNA ligase (514 aa).

The span at 1-13 shows a compositional bias: low complexity; sequence MSKPNNQNQQNNQ. Positions 1–21 are disordered; sequence MSKPNNQNQQNNQEPAPEDAN. 2 residues coordinate Mg(2+): Glu422 and Glu429.

It belongs to the class-II aminoacyl-tRNA synthetase family. Homodimer. The cofactor is Mg(2+).

The protein resides in the cytoplasm. It catalyses the reaction tRNA(Lys) + L-lysine + ATP = L-lysyl-tRNA(Lys) + AMP + diphosphate. The chain is Lysine--tRNA ligase from Psychrobacter cryohalolentis (strain ATCC BAA-1226 / DSM 17306 / VKM B-2378 / K5).